We begin with the raw amino-acid sequence, 263 residues long: Glutamate racemase (263 aa).

Residues 13–14 (DS) and 45–46 (YG) contribute to the substrate site. The active-site Proton donor/acceptor is cysteine 77. 78–79 (NT) contacts substrate. Cysteine 185 serves as the catalytic Proton donor/acceptor. 186–187 (TH) is a substrate binding site.

It belongs to the aspartate/glutamate racemases family.

It catalyses the reaction L-glutamate = D-glutamate. It participates in cell wall biogenesis; peptidoglycan biosynthesis. Provides the (R)-glutamate required for cell wall biosynthesis. The protein is Glutamate racemase of Vibrio vulnificus (strain CMCP6).